The following is a 157-amino-acid chain: Lipoprotein signal peptidase (157 aa).

The next 4 membrane-spanning stretches (helical) occupy residues 10-30 (LVFMGGFFLIFGVDQAIKYAI), 38-58 (SLMVDIVLVFNKGVAFSLLSF), 59-79 (LEGGLKYLQILLILGLFIFLI), and 84-104 (LFKTHAIEFGMVFGAGVSNVL). Active-site residues include D114 and D131. A helical transmembrane segment spans residues 122-142 (FDFAIFNFADVMIDVGVGVLL).

The protein belongs to the peptidase A8 family.

Its subcellular location is the cell inner membrane. It catalyses the reaction Release of signal peptides from bacterial membrane prolipoproteins. Hydrolyzes -Xaa-Yaa-Zaa-|-(S,diacylglyceryl)Cys-, in which Xaa is hydrophobic (preferably Leu), and Yaa (Ala or Ser) and Zaa (Gly or Ala) have small, neutral side chains.. The protein operates within protein modification; lipoprotein biosynthesis (signal peptide cleavage). Its function is as follows. This protein specifically catalyzes the removal of signal peptides from prolipoproteins. This is Lipoprotein signal peptidase from Helicobacter pylori (strain HPAG1).